A 745-amino-acid polypeptide reads, in one-letter code: NAD(P)H-quinone oxidoreductase subunit 5, chloroplastic (745 aa).

A run of 16 helical transmembrane segments spans residues 9-29, 50-70, 99-119, 135-155, 157-177, 194-214, 229-249, 268-288, 290-310, 337-357, 364-384, 406-426, 435-455, 550-570, 610-630, and 724-744; these read WIIP…LLLF, WAFP…DLSI, IDSL…FVLI, FAYM…CNLI, IYIF…FWFT, IGDF…GSFE, NEVH…GAVA, TPIS…FLVA, LFPL…IGII, LGYM…FHLI, ALLF…VGYS, IAFL…CFWS, WLYS…TAFY, LFPM…AIPF, FSVS…KPFY, and FYLL…YFIL.

It belongs to the complex I subunit 5 family. As to quaternary structure, NDH is composed of at least 16 different subunits, 5 of which are encoded in the nucleus.

It is found in the plastid. Its subcellular location is the chloroplast thylakoid membrane. The enzyme catalyses a plastoquinone + NADH + (n+1) H(+)(in) = a plastoquinol + NAD(+) + n H(+)(out). It catalyses the reaction a plastoquinone + NADPH + (n+1) H(+)(in) = a plastoquinol + NADP(+) + n H(+)(out). NDH shuttles electrons from NAD(P)H:plastoquinone, via FMN and iron-sulfur (Fe-S) centers, to quinones in the photosynthetic chain and possibly in a chloroplast respiratory chain. The immediate electron acceptor for the enzyme in this species is believed to be plastoquinone. Couples the redox reaction to proton translocation, and thus conserves the redox energy in a proton gradient. This is NAD(P)H-quinone oxidoreductase subunit 5, chloroplastic (ndhF) from Gossypium barbadense (Sea Island cotton).